The following is a 370-amino-acid chain: 3-dehydroquinate synthase (370 aa).

NAD(+)-binding positions include 70-75, 104-108, 128-129, Lys141, Lys150, and 168-171; these read DAEDGK, GAATD, TT, and TLET. Positions 183, 246, and 262 each coordinate Zn(2+).

This sequence belongs to the sugar phosphate cyclases superfamily. Dehydroquinate synthase family. Co(2+) is required as a cofactor. Zn(2+) serves as cofactor. It depends on NAD(+) as a cofactor.

It localises to the cytoplasm. It carries out the reaction 7-phospho-2-dehydro-3-deoxy-D-arabino-heptonate = 3-dehydroquinate + phosphate. The protein operates within metabolic intermediate biosynthesis; chorismate biosynthesis; chorismate from D-erythrose 4-phosphate and phosphoenolpyruvate: step 2/7. Its function is as follows. Catalyzes the conversion of 3-deoxy-D-arabino-heptulosonate 7-phosphate (DAHP) to dehydroquinate (DHQ). The chain is 3-dehydroquinate synthase from Rhodococcus opacus (strain B4).